A 315-amino-acid polypeptide reads, in one-letter code: PIH1 domain-containing protein 2 (315 aa).

It belongs to the PIH1 family.

This Bos taurus (Bovine) protein is PIH1 domain-containing protein 2 (PIH1D2).